Here is a 366-residue protein sequence, read N- to C-terminus: Putative type II methyltransferase M.MjaORF1200P (366 aa).

The 362-residue stretch at 5–366 (LKFIDLFCGC…IARVIKENLK (362 aa)) folds into the SAM-dependent MTase C5-type domain. Cysteine 133 is an active-site residue.

This sequence belongs to the class I-like SAM-binding methyltransferase superfamily. C5-methyltransferase family.

The enzyme catalyses a 2'-deoxycytidine in DNA + S-adenosyl-L-methionine = a 5-methyl-2'-deoxycytidine in DNA + S-adenosyl-L-homocysteine + H(+). A putative methylase that probably protects DNA from cleavage by the MjaORF1200P endonuclease. The polypeptide is Putative type II methyltransferase M.MjaORF1200P (Methanocaldococcus jannaschii (strain ATCC 43067 / DSM 2661 / JAL-1 / JCM 10045 / NBRC 100440) (Methanococcus jannaschii)).